The sequence spans 204 residues: Large ribosomal subunit protein bL25 (204 aa).

It belongs to the bacterial ribosomal protein bL25 family. CTC subfamily. Part of the 50S ribosomal subunit; part of the 5S rRNA/L5/L18/L25 subcomplex. Contacts the 5S rRNA. Binds to the 5S rRNA independently of L5 and L18.

Its function is as follows. This is one of the proteins that binds to the 5S RNA in the ribosome where it forms part of the central protuberance. This Burkholderia pseudomallei (strain 668) protein is Large ribosomal subunit protein bL25.